A 419-amino-acid chain; its full sequence is GTPase Obg (419 aa).

An Obg domain is found at 1–156 (MRFVDYVSIE…FYLDLQLKVM (156 aa)). The OBG-type G domain occupies 157 to 334 (ADIGLVGKPN…LGENQKKLEI (178 aa)). GTP is bound by residues 163 to 170 (GKPNAGKS), 188 to 192 (FTTLV), 209 to 212 (DLPG), 278 to 281 (NKCD), and 315 to 317 (NII). Mg(2+) contacts are provided by S170 and T190. Positions 342–419 (IEFNLKAPFL…RIYEFEFHWN (78 aa)) constitute an OCT domain.

Belongs to the TRAFAC class OBG-HflX-like GTPase superfamily. OBG GTPase family. As to quaternary structure, monomer. The cofactor is Mg(2+).

It localises to the cytoplasm. Its function is as follows. An essential GTPase which binds GTP, GDP and possibly (p)ppGpp with moderate affinity, with high nucleotide exchange rates and a fairly low GTP hydrolysis rate. Plays a role in control of the cell cycle, stress response, ribosome biogenesis and in those bacteria that undergo differentiation, in morphogenesis control. The polypeptide is GTPase Obg (Mesomycoplasma hyopneumoniae (strain 7448) (Mycoplasma hyopneumoniae)).